Consider the following 303-residue polypeptide: Olfactory receptor 4X2 (303 aa).

The Extracellular portion of the chain corresponds to 1–17 (MTEFIFLVLSPNQEVQR). Residues 18-41 (VCFVIFLFLYTAIVLGNFLIVLTV) traverse the membrane as a helical segment. At 42 to 49 (MTSRSLGS) the chain is on the cytoplasmic side. The chain crosses the membrane as a helical span at residues 50-71 (PMYFFLSYLSFMEICYSSATAP). The Extracellular segment spans residues 72-92 (KLISDLLAERKVISWWGCMAQ). Residues C89 and C181 are joined by a disulfide bond. Residues 93–112 (LFFLHFFGGTEIFLLTVMAY) traverse the membrane as a helical segment. Over 113 to 131 (DHYVAICKPLSYTTIMNWQ) the chain is Cytoplasmic. The chain crosses the membrane as a helical span at residues 132–150 (VCTVLVGIAWVGGFMHSFA). Topologically, residues 151 to 187 (QILLIFHLLFCGPNVINHYFCDLVPLLKLACSDTFLI) are extracellular. A helical transmembrane segment spans residues 188–211 (GLLIVANGGTLSVISFGVLLASYM). Residues 212–227 (VILLHLRTWSSEGWCK) are Cytoplasmic-facing. The helical transmembrane segment at 228-250 (ALSTCGSHFAVVILFFGPCVFNS) threads the bilayer. Topologically, residues 251 to 261 (LRPSTTLPIDK) are extracellular. Residues 262–281 (MVAVFYTVITAILNPVIYSL) traverse the membrane as a helical segment. The Cytoplasmic portion of the chain corresponds to 282–303 (RNAEMRKAMKRLWIRTLRLNEK).

The protein belongs to the G-protein coupled receptor 1 family.

It localises to the cell membrane. Its function is as follows. Odorant receptor. The chain is Olfactory receptor 4X2 (OR4X2) from Homo sapiens (Human).